The following is a 172-amino-acid chain: Putative metal-dependent hydrolase OB0782 (172 aa).

H64, H155, and H159 together coordinate Zn(2+).

The protein belongs to the metal hydrolase YfiT family. Homodimer. It depends on Zn(2+) as a cofactor.

It is found in the cytoplasm. Its function is as follows. Possible metal-dependent hydrolase. This Oceanobacillus iheyensis (strain DSM 14371 / CIP 107618 / JCM 11309 / KCTC 3954 / HTE831) protein is Putative metal-dependent hydrolase OB0782.